Reading from the N-terminus, the 186-residue chain is NADH-quinone oxidoreductase subunit B (186 aa).

Positions 44, 45, 110, and 139 each coordinate [4Fe-4S] cluster.

This sequence belongs to the complex I 20 kDa subunit family. NDH-1 is composed of 14 different subunits. Subunits NuoB, C, D, E, F, and G constitute the peripheral sector of the complex. Requires [4Fe-4S] cluster as cofactor.

The protein localises to the cell inner membrane. It catalyses the reaction a quinone + NADH + 5 H(+)(in) = a quinol + NAD(+) + 4 H(+)(out). NDH-1 shuttles electrons from NADH, via FMN and iron-sulfur (Fe-S) centers, to quinones in the respiratory chain. The immediate electron acceptor for the enzyme in this species is believed to be ubiquinone. Couples the redox reaction to proton translocation (for every two electrons transferred, four hydrogen ions are translocated across the cytoplasmic membrane), and thus conserves the redox energy in a proton gradient. This is NADH-quinone oxidoreductase subunit B from Leptospira biflexa serovar Patoc (strain Patoc 1 / Ames).